We begin with the raw amino-acid sequence, 426 residues long: Histidinol dehydrogenase (426 aa).

NAD(+) contacts are provided by Tyr125, Gln187, and Asn210. Residues Ser233, Gln255, and His258 each contribute to the substrate site. 2 residues coordinate Zn(2+): Gln255 and His258. Active-site proton acceptor residues include Glu323 and His324. The substrate site is built by His324, Asp357, Glu411, and His416. Asp357 serves as a coordination point for Zn(2+). His416 serves as a coordination point for Zn(2+).

It belongs to the histidinol dehydrogenase family. It depends on Zn(2+) as a cofactor.

The catalysed reaction is L-histidinol + 2 NAD(+) + H2O = L-histidine + 2 NADH + 3 H(+). The protein operates within amino-acid biosynthesis; L-histidine biosynthesis; L-histidine from 5-phospho-alpha-D-ribose 1-diphosphate: step 9/9. In terms of biological role, catalyzes the sequential NAD-dependent oxidations of L-histidinol to L-histidinaldehyde and then to L-histidine. The protein is Histidinol dehydrogenase (hisD) of Methanothermobacter thermautotrophicus (strain ATCC 29096 / DSM 1053 / JCM 10044 / NBRC 100330 / Delta H) (Methanobacterium thermoautotrophicum).